Reading from the N-terminus, the 310-residue chain is ADP-L-glycero-D-manno-heptose-6-epimerase (310 aa).

Residues 10–11, 31–32, K38, K53, 75–79, and N92 contribute to the NADP(+) site; these read FI, DN, and EGACS. Y140 acts as the Proton acceptor in catalysis. K144 contributes to the NADP(+) binding site. N169 contacts substrate. NADP(+) contacts are provided by V170 and K178. K178 acts as the Proton acceptor in catalysis. Residues S180, H187, 201–204, R209, and Y272 contribute to the substrate site; that span reads FAGS.

The protein belongs to the NAD(P)-dependent epimerase/dehydratase family. HldD subfamily. Homopentamer. NADP(+) serves as cofactor.

The catalysed reaction is ADP-D-glycero-beta-D-manno-heptose = ADP-L-glycero-beta-D-manno-heptose. It functions in the pathway nucleotide-sugar biosynthesis; ADP-L-glycero-beta-D-manno-heptose biosynthesis; ADP-L-glycero-beta-D-manno-heptose from D-glycero-beta-D-manno-heptose 7-phosphate: step 4/4. Its function is as follows. Catalyzes the interconversion between ADP-D-glycero-beta-D-manno-heptose and ADP-L-glycero-beta-D-manno-heptose via an epimerization at carbon 6 of the heptose. This chain is ADP-L-glycero-D-manno-heptose-6-epimerase, found in Yersinia pseudotuberculosis serotype O:1b (strain IP 31758).